The sequence spans 706 residues: Polyribonucleotide nucleotidyltransferase (706 aa).

Residues aspartate 487 and aspartate 493 each contribute to the Mg(2+) site. The KH domain occupies 553–612; that stretch reads PRLFTMKINQDKIREVIGKGGETIRAITAETGTEINIAEDGTITIAATTQEAGDAAKKRI. An S1 motif domain is found at 622–692; that stretch reads GKVYEGTVVK…DRGRVRLSIK (71 aa).

This sequence belongs to the polyribonucleotide nucleotidyltransferase family. The cofactor is Mg(2+).

Its subcellular location is the cytoplasm. It catalyses the reaction RNA(n+1) + phosphate = RNA(n) + a ribonucleoside 5'-diphosphate. Functionally, involved in mRNA degradation. Catalyzes the phosphorolysis of single-stranded polyribonucleotides processively in the 3'- to 5'-direction. This is Polyribonucleotide nucleotidyltransferase from Neisseria meningitidis serogroup A / serotype 4A (strain DSM 15465 / Z2491).